A 304-amino-acid chain; its full sequence is Putative S-adenosyl-L-methionine-dependent methyltransferase Mjls_1071 (304 aa).

S-adenosyl-L-methionine is bound by residues Asp-130 and 159 to 160 (DL).

It belongs to the UPF0677 family.

Exhibits S-adenosyl-L-methionine-dependent methyltransferase activity. This is Putative S-adenosyl-L-methionine-dependent methyltransferase Mjls_1071 from Mycobacterium sp. (strain JLS).